The sequence spans 923 residues: DNA mismatch repair protein MutS (923 aa).

Residue 671–678 (GPNMAGKS) participates in ATP binding.

This sequence belongs to the DNA mismatch repair MutS family.

Functionally, this protein is involved in the repair of mismatches in DNA. It is possible that it carries out the mismatch recognition step. This protein has a weak ATPase activity. This is DNA mismatch repair protein MutS from Rhodopseudomonas palustris (strain BisB5).